Consider the following 219-residue polypeptide: 2-hydroxy-3-keto-5-methylthiopentenyl-1-phosphate phosphatase (219 aa).

The protein belongs to the HAD-like hydrolase superfamily. MtnX family.

The enzyme catalyses 2-hydroxy-5-methylsulfanyl-3-oxopent-1-enyl phosphate + H2O = 1,2-dihydroxy-5-(methylsulfanyl)pent-1-en-3-one + phosphate. It participates in amino-acid biosynthesis; L-methionine biosynthesis via salvage pathway; L-methionine from S-methyl-5-thio-alpha-D-ribose 1-phosphate: step 4/6. Its function is as follows. Dephosphorylates 2-hydroxy-3-keto-5-methylthiopentenyl-1-phosphate (HK-MTPenyl-1-P) yielding 1,2-dihydroxy-3-keto-5-methylthiopentene (DHK-MTPene). The sequence is that of 2-hydroxy-3-keto-5-methylthiopentenyl-1-phosphate phosphatase from Bacillus cytotoxicus (strain DSM 22905 / CIP 110041 / 391-98 / NVH 391-98).